Here is a 504-residue protein sequence, read N- to C-terminus: Zinc finger CCCH domain-containing protein 18 (504 aa).

Positions 40-69 (SNADLLEVHEELLAAIKDAEEGLLHLKRSR) form a coiled coil. Residues 77–105 (IFPNQEPTSEAPEVAVDPPDDVEPEPLEP) form a disordered region. Over residues 94-104 (PPDDVEPEPLE) the composition is skewed to acidic residues. The C3H1-type zinc-finger motif lies at 146-173 (SENMSMCKFFLQQRCRFGSNCRLSHGIV). A disordered region spans residues 230 to 276 (GSSARLPSDSLSISEYADESDEDGEGSSSDEGSDFSEDGDQEDESVH). Composition is skewed to acidic residues over residues 245–254 (YADESDEDGE) and 260–272 (EGSD…DQED). The G-patch domain occupies 304-350 (TRGVASKMMAKMGYREGMGLGVSGQGMLDPIPVKVLPPKQSLDHAVA). Disordered regions lie at residues 351–390 (ASEV…EEER), 406–432 (AEGS…DRRS), and 482–504 (EATH…WLKF). A compositionally biased stretch (basic residues) spans 361-374 (GKKRSRGGKRKREK). Composition is skewed to basic and acidic residues over residues 375–390 (KFAE…EEER), 413–432 (SKKD…DRRS), and 493–504 (ARKEKEKKWLKF). Residues 430–500 (RRSLLAYDDE…AVARKEKEKK (71 aa)) are a coiled coil.

The protein is Zinc finger CCCH domain-containing protein 18 of Oryza sativa subsp. japonica (Rice).